Reading from the N-terminus, the 175-residue chain is Small ribosomal subunit protein uS7 (175 aa).

This sequence belongs to the universal ribosomal protein uS7 family. In terms of assembly, part of the 30S ribosomal subunit. Contacts proteins S9 and S11.

One of the primary rRNA binding proteins, it binds directly to 16S rRNA where it nucleates assembly of the head domain of the 30S subunit. Is located at the subunit interface close to the decoding center, probably blocks exit of the E-site tRNA. This Neorickettsia sennetsu (strain ATCC VR-367 / Miyayama) (Ehrlichia sennetsu) protein is Small ribosomal subunit protein uS7.